The following is a 92-amino-acid chain: Small ribosomal subunit protein uS19c (92 aa).

It belongs to the universal ribosomal protein uS19 family.

It is found in the plastid. Its subcellular location is the chloroplast. In terms of biological role, protein S19 forms a complex with S13 that binds strongly to the 16S ribosomal RNA. The chain is Small ribosomal subunit protein uS19c from Nicotiana sylvestris (Wood tobacco).